We begin with the raw amino-acid sequence, 363 residues long: MKNFILLAVSSILLVDLLPTHFEHNVDLSRAINVNGVSFNNVDTSSLGAQQVRQSASRGRGLGEKPKEGADKEKKKEKGKEKEEEPKKPNENKLKQPNEGQPQAQGDGANAGQPQAQGDGANAGQPQAQGDGANAGQPQAQGDGANAGQPQAQGDGANAGQPQAQGDGANAGQPQAQGDGANAGQPQAQGDGANAGQPQAQGDGANAGQPQAQGDGANAGQPQAQGDGANAGQPQAQGDGANVPRQGRNGGGAPAGGNEGNKQAGKGQGQNNQGANAPNEKVVNDYLHKIRSSVTTEWTPCSVTCGNGVRIRRKAHAGNKKAEDLTMDDLEVEACVMDKCAGIFNVVSNSLGLVILLVLALFN.

The N-terminal stretch at 1 to 22 (MKNFILLAVSSILLVDLLPTHF) is a signal peptide. Over residues 48 to 57 (GAQQVRQSAS) the composition is skewed to polar residues. The disordered stretch occupies residues 48–278 (GAQQVRQSAS…GQNNQGANAP (231 aa)). Over residues 61–96 (GLGEKPKEGADKEKKKEKGKEKEEEPKKPNENKLKQ) the composition is skewed to basic and acidic residues. The interval 80–88 (KEKEEEPKK) is required for the binding to heparan sulfate proteoglycans (HSPGs) on the surface of host hepatocytes. Positions 93–97 (KLKQP) are region I; contains the proteolytic cleavage site. Residues 98–109 (NEGQPQAQGDGA) form a 1; approximate repeat. The 12 X 12 AA approximate tandem repeats of N-A-G-Q-P-Q-A-Q-G-D-G-A stretch occupies residues 98 to 241 (NEGQPQAQGD…GQPQAQGDGA (144 aa)). 11 consecutive repeat copies span residues 110-121 (NAGQPQAQGDGA), 122-133 (NAGQPQAQGDGA), 134-145 (NAGQPQAQGDGA), 146-157 (NAGQPQAQGDGA), 158-169 (NAGQPQAQGDGA), 170-181 (NAGQPQAQGDGA), 182-193 (NAGQPQAQGDGA), 194-205 (NAGQPQAQGDGA), 206-217 (NAGQPQAQGDGA), 218-229 (NAGQPQAQGDGA), and 230-241 (NAGQPQAQGDGA). Positions 248–259 (RNGGGAPAGGNE) are enriched in gly residues. Over residues 260–277 (GNKQAGKGQGQNNQGANA) the composition is skewed to low complexity. The TSP type-1 domain occupies 289–341 (KIRSSVTTEWTPCSVTCGNGVRIRRKAHAGNKKAEDLTMDDLEVEACVMDKCA). Disulfide bonds link C301-C335 and C305-C340. T304 carries an O-linked (Fuc) threonine glycan. C340 carries the GPI-anchor amidated cysteine lipid modification. The propeptide at 341–363 (AGIFNVVSNSLGLVILLVLALFN) is removed in mature form.

Belongs to the plasmodium circumsporozoite protein family. In terms of processing, during host cell invasion, proteolytically cleaved at the cell membrane in the region I by a papain-like cysteine protease of parasite origin. Cleavage is triggered by the sporozoite contact with highly sulfated heparan sulfate proteoglycans (HSPGs) present on the host hepatocyte cell surface. Cleavage exposes the TSP type-1 (TSR) domain and is required for productive invasion of host hepatocytes but not for adhesion to the host cell membrane. Cleavage is dispensable for sporozoite development in the oocyst, motility and for traversal of host and vector cells. Post-translationally, O-glycosylated; maybe by POFUT2.

It localises to the cell membrane. It is found in the cytoplasm. Functionally, essential sporozoite protein. In the mosquito vector, required for sporozoite development in the oocyst, migration through the vector hemolymph and entry into the vector salivary glands. In the vertebrate host, required for sporozoite migration through the host dermis and infection of host hepatocytes. Binds to highly sulfated heparan sulfate proteoglycans (HSPGs) on the surface of host hepatocytes. Its function is as follows. In the vertebrate host, binds to highly sulfated heparan sulfate proteoglycans (HSPGs) on the surface of host hepatocytes and is required for sporozoite invasion of the host hepatocytes. This chain is Circumsporozoite protein, found in Plasmodium knowlesi (strain H).